Here is a 513-residue protein sequence, read N- to C-terminus: Cytochrome P450 1A2 (513 aa).

A glycan (O-linked (GlcNAc) serine) is linked at Ser-68. Phe-225 contacts substrate. Heme is bound at residue Cys-456.

This sequence belongs to the cytochrome P450 family. In terms of assembly, interacts with PGRMC1; the interaction requires PGRMC1 homodimerization. Heme serves as cofactor.

It localises to the endoplasmic reticulum membrane. The protein resides in the microsome membrane. It carries out the reaction an organic molecule + reduced [NADPH--hemoprotein reductase] + O2 = an alcohol + oxidized [NADPH--hemoprotein reductase] + H2O + H(+). It catalyses the reaction 17beta-estradiol + reduced [NADPH--hemoprotein reductase] + O2 = 2-hydroxy-17beta-estradiol + oxidized [NADPH--hemoprotein reductase] + H2O + H(+). The catalysed reaction is 17beta-estradiol + reduced [NADPH--hemoprotein reductase] + O2 = 4-hydroxy-17beta-estradiol + oxidized [NADPH--hemoprotein reductase] + H2O + H(+). The enzyme catalyses estrone + reduced [NADPH--hemoprotein reductase] + O2 = 2-hydroxyestrone + oxidized [NADPH--hemoprotein reductase] + H2O + H(+). It carries out the reaction estrone + reduced [NADPH--hemoprotein reductase] + O2 = 4-hydroxyestrone + oxidized [NADPH--hemoprotein reductase] + H2O + H(+). It catalyses the reaction cholesterol + reduced [NADPH--hemoprotein reductase] + O2 = 25-hydroxycholesterol + oxidized [NADPH--hemoprotein reductase] + H2O + H(+). The catalysed reaction is all-trans-retinol + reduced [NADPH--hemoprotein reductase] + O2 = all-trans-retinal + oxidized [NADPH--hemoprotein reductase] + 2 H2O + H(+). The enzyme catalyses all-trans-retinal + reduced [NADPH--hemoprotein reductase] + O2 = all-trans-retinoate + oxidized [NADPH--hemoprotein reductase] + H2O + 2 H(+). It carries out the reaction (5Z,8Z,11Z,14Z)-eicosatetraenoate + reduced [NADPH--hemoprotein reductase] + O2 = (14R,15S)-epoxy-(5Z,8Z,11Z)-eicosatrienoate + oxidized [NADPH--hemoprotein reductase] + H2O + H(+). It catalyses the reaction (5Z,8Z,11Z,14Z)-eicosatetraenoate + reduced [NADPH--hemoprotein reductase] + O2 = (14S,15R)-epoxy-(5Z,8Z,11Z)-eicosatrienoate + oxidized [NADPH--hemoprotein reductase] + H2O + H(+). The catalysed reaction is (5Z,8Z,11Z,14Z,17Z)-eicosapentaenoate + reduced [NADPH--hemoprotein reductase] + O2 = (17R,18S)-epoxy-(5Z,8Z,11Z,14Z)-eicosatetraenoate + oxidized [NADPH--hemoprotein reductase] + H2O + H(+). The enzyme catalyses (4Z,7Z,10Z,13Z,16Z,19Z)-docosahexaenoate + reduced [NADPH--hemoprotein reductase] + O2 = (19R,20S)-epoxy-(4Z,7Z,10Z,13Z,16Z)-docosapentaenoate + oxidized [NADPH--hemoprotein reductase] + H2O + H(+). It carries out the reaction (5S)-hydroperoxy-(6E,8Z,11Z,14Z)-eicosatetraenoate = 5-oxo-(6E,8Z,11Z,14Z)-eicosatetraenoate + H2O. It catalyses the reaction (12S)-hydroperoxy-(5Z,8Z,10E,14Z)-eicosatetraenoate = 12-oxo-(5Z,8Z,10E,14Z)-eicosatetraenoate + H2O. The catalysed reaction is (15S)-hydroperoxy-(5Z,8Z,11Z,13E)-eicosatetraenoate = 15-oxo-(5Z,8Z,11Z,13E)-eicosatetraenoate + H2O. The enzyme catalyses (13S)-hydroperoxy-(9Z,11E)-octadecadienoate = 13-oxo-(9Z,11E)-octadecadienoate + H2O. It carries out the reaction (5Z,8Z,11Z,14Z)-eicosatetraenoate + reduced [NADPH--hemoprotein reductase] + O2 = 13-hydroxy-(5Z,8Z,11Z,14Z)-eicosatetraenoate + oxidized [NADPH--hemoprotein reductase] + H2O + H(+). It catalyses the reaction (5Z,8Z,11Z,14Z)-eicosatetraenoate + reduced [NADPH--hemoprotein reductase] + O2 = 19-hydroxy-(5Z,8Z,11Z,14Z)-eicosatetraenoate + oxidized [NADPH--hemoprotein reductase] + H2O + H(+). The catalysed reaction is (9Z,12Z)-octadecadienoate + reduced [NADPH--hemoprotein reductase] + O2 = 11-hydroxy-(9Z,12Z)-octadecadienoate + oxidized [NADPH--hemoprotein reductase] + H2O + H(+). The protein operates within cofactor metabolism; retinol metabolism. Its pathway is steroid metabolism; cholesterol metabolism. It participates in lipid metabolism; arachidonate metabolism. A cytochrome P450 monooxygenase involved in the metabolism of various endogenous substrates, including fatty acids, steroid hormones and vitamins. Mechanistically, uses molecular oxygen inserting one oxygen atom into a substrate, and reducing the second into a water molecule, with two electrons provided by NADPH via cytochrome P450 reductase (NADPH--hemoprotein reductase). Catalyzes the hydroxylation of carbon-hydrogen bonds. Exhibits high catalytic activity for the formation of hydroxyestrogens from estrone (E1) and 17beta-estradiol (E2), namely 2-hydroxy E1 and E2. Metabolizes cholesterol toward 25-hydroxycholesterol, a physiological regulator of cellular cholesterol homeostasis. May act as a major enzyme for all-trans retinoic acid biosynthesis in the liver. Catalyzes two successive oxidative transformation of all-trans retinol to all-trans retinal and then to the active form all-trans retinoic acid. Primarily catalyzes stereoselective epoxidation of the last double bond of polyunsaturated fatty acids (PUFA), displaying a strong preference for the (R,S) stereoisomer. Catalyzes bisallylic hydroxylation and omega-1 hydroxylation of PUFA. May also participate in eicosanoids metabolism by converting hydroperoxide species into oxo metabolites (lipoxygenase-like reaction, NADPH-independent). Plays a role in the oxidative metabolism of xenobiotics. Catalyzes the N-hydroxylation of heterocyclic amines and the O-deethylation of phenacetin. Metabolizes caffeine via N3-demethylation. This is Cytochrome P450 1A2 (Cyp1a2) from Mus musculus (Mouse).